An 85-amino-acid chain; its full sequence is Progonadoliberin-2 (85 aa).

Positions 1–23 (MCASRLVLLLGLLLCVGAHLSSG) are cleaved as a signal peptide. Glutamine 24 is subject to Pyrrolidone carboxylic acid. Glycine 33 is subject to Glycine amide.

The protein belongs to the GnRH family. Midbrain tegmentum.

Its subcellular location is the secreted. Its function is as follows. Stimulates the secretion of gonadotropins. In Verasper moseri (Barfin flounder), this protein is Progonadoliberin-2 (gnrh2).